A 268-amino-acid chain; its full sequence is Thymidylate synthase (268 aa).

DUMP is bound at residue R27. Residue H57 participates in (6R)-5,10-methylene-5,6,7,8-tetrahydrofolate binding. 132 to 133 contacts dUMP; that stretch reads RR. The Nucleophile role is filled by C152. Residues 172–175, N183, and 213–215 each bind dUMP; these read RSAD and HVY. Position 175 (D175) interacts with (6R)-5,10-methylene-5,6,7,8-tetrahydrofolate. A267 is a binding site for (6R)-5,10-methylene-5,6,7,8-tetrahydrofolate.

Belongs to the thymidylate synthase family. Bacterial-type ThyA subfamily. As to quaternary structure, homodimer.

It is found in the cytoplasm. The enzyme catalyses dUMP + (6R)-5,10-methylene-5,6,7,8-tetrahydrofolate = 7,8-dihydrofolate + dTMP. Its pathway is pyrimidine metabolism; dTTP biosynthesis. In terms of biological role, catalyzes the reductive methylation of 2'-deoxyuridine-5'-monophosphate (dUMP) to 2'-deoxythymidine-5'-monophosphate (dTMP) while utilizing 5,10-methylenetetrahydrofolate (mTHF) as the methyl donor and reductant in the reaction, yielding dihydrofolate (DHF) as a by-product. This enzymatic reaction provides an intracellular de novo source of dTMP, an essential precursor for DNA biosynthesis. In Kineococcus radiotolerans (strain ATCC BAA-149 / DSM 14245 / SRS30216), this protein is Thymidylate synthase.